We begin with the raw amino-acid sequence, 320 residues long: Protoheme IX farnesyltransferase (320 aa).

Transmembrane regions (helical) follow at residues Val38–Pro58, Ile60–Phe80, Glu109–Ala129, Leu132–Leu152, Asn159–Thr179, Trp184–Leu204, Ala222–Ala242, Gly254–Tyr276, and Tyr299–Gly319.

The protein belongs to the UbiA prenyltransferase family. Protoheme IX farnesyltransferase subfamily.

The protein resides in the cell membrane. The catalysed reaction is heme b + (2E,6E)-farnesyl diphosphate + H2O = Fe(II)-heme o + diphosphate. It functions in the pathway porphyrin-containing compound metabolism; heme O biosynthesis; heme O from protoheme: step 1/1. Converts heme B (protoheme IX) to heme O by substitution of the vinyl group on carbon 2 of heme B porphyrin ring with a hydroxyethyl farnesyl side group. The sequence is that of Protoheme IX farnesyltransferase from Paenarthrobacter aurescens (strain TC1).